The following is a 695-amino-acid chain: Polyribonucleotide nucleotidyltransferase (695 aa).

2 residues coordinate Mg(2+): D486 and D492. The region spanning 553–612 (PRMIVFKINPEKIRDVIGKGGATIRALTEETGTTIDIVDDGTVKIFSADKADGQEAKRRV) is the KH domain. Positions 622-690 (GKIYEGRVSR…KQGRVRLSVK (69 aa)) constitute an S1 motif domain.

Belongs to the polyribonucleotide nucleotidyltransferase family. As to quaternary structure, component of the RNA degradosome, which is a multiprotein complex involved in RNA processing and mRNA degradation. Mg(2+) serves as cofactor.

The protein localises to the cytoplasm. The catalysed reaction is RNA(n+1) + phosphate = RNA(n) + a ribonucleoside 5'-diphosphate. Its function is as follows. Involved in mRNA degradation. Catalyzes the phosphorolysis of single-stranded polyribonucleotides processively in the 3'- to 5'-direction. The sequence is that of Polyribonucleotide nucleotidyltransferase from Nitrosococcus oceani (strain ATCC 19707 / BCRC 17464 / JCM 30415 / NCIMB 11848 / C-107).